The chain runs to 246 residues: Endonuclease V (246 aa).

2 residues coordinate Mg(2+): Asp50 and Asp120.

It belongs to the endonuclease V family. Mg(2+) serves as cofactor.

Its subcellular location is the cytoplasm. It catalyses the reaction Endonucleolytic cleavage at apurinic or apyrimidinic sites to products with a 5'-phosphate.. Functionally, DNA repair enzyme involved in the repair of deaminated bases. Selectively cleaves double-stranded DNA at the second phosphodiester bond 3' to a deoxyinosine leaving behind the intact lesion on the nicked DNA. The sequence is that of Endonuclease V from Gloeobacter violaceus (strain ATCC 29082 / PCC 7421).